We begin with the raw amino-acid sequence, 367 residues long: 2-oxoisovalerate dehydrogenase subunit alpha (367 aa).

Substrate contacts are provided by residues Phe66, Tyr95, 128–131 (MPEH), and Ser144. 94–96 (YYR) provides a ligand contact to thiamine diphosphate. Residues 144 to 146 (SPI), 174 to 180 (GDGATSE), 204 to 208 (NFYAI), and His273 contribute to the thiamine diphosphate site. 3 residues coordinate Mg(2+): Asp175, Asn204, and Tyr206.

It belongs to the BCKDHA family. In terms of assembly, heterotetramer of two alpha and two beta chains. Directly associated with ODBB in the E1 complex. Thiamine diphosphate is required as a cofactor.

The enzyme catalyses N(6)-[(R)-lipoyl]-L-lysyl-[protein] + 3-methyl-2-oxobutanoate + H(+) = N(6)-[(R)-S(8)-2-methylpropanoyldihydrolipoyl]-L-lysyl-[protein] + CO2. In terms of biological role, the branched-chain alpha-keto dehydrogenase complex catalyzes the overall conversion of alpha-keto acids to acyl-CoA and CO(2). It contains multiple copies of three enzymatic components: branched-chain alpha-keto acid decarboxylase (E1), lipoamide acyltransferase (E2) and lipoamide dehydrogenase (E3). This is 2-oxoisovalerate dehydrogenase subunit alpha from Thermus thermophilus (strain ATCC 27634 / DSM 579 / HB8).